Consider the following 440-residue polypeptide: MRRYLRVVVLCVACGFCSLLYAFSQLAVSLEEGTGGGGGKPQAAVASWLAGGGRGAVRGAGVAGPAAHPGVSDRCKDFSLCYWNPYWMLPSDVCGMNCFWEAAFRYSLKIQPVEKMHLAVVACGERLEETMTMLKSAIIFSIKPLQFHIFAEDQLHHSFKGRLDNWSFLQTFNYTLYPITFPSENAAEWKKLFKPCASQRLFLPLILKEVDSLLYVDTDILFLRPVDDIWSLLKKFNSTQIAAMAPEHEEPRIGWYNRFARHPYYGKTGVNSGVMLMNMTRMRRKYFKNDMTTVRLQWGDILMPLLKKYKLNITWGDQDLLNIVFFHNPESLFVFPCQWNYRPDHCIYGSNCQEAEEGGIFILHGNRGVYHDDKQPAFRAVYEALRNCSFEDDNIRSLLKPLELELQKTVHTYCGKIYKIFIKQLAKSVRDRYARSPKEK.

Topologically, residues 1 to 6 are cytoplasmic; it reads MRRYLR. A helical; Signal-anchor for type II membrane protein membrane pass occupies residues 7–29; the sequence is VVVLCVACGFCSLLYAFSQLAVS. The Lumenal portion of the chain corresponds to 30–440; it reads LEEGTGGGGG…DRYARSPKEK (411 aa). Residues N173, N237, and N278 are each glycosylated (N-linked (GlcNAc...) asparagine).

Belongs to the glycosyltransferase 8 family.

It localises to the membrane. It catalyses the reaction 3-O-(beta-D-glucosyl)-L-seryl-[EGF-like domain protein] + UDP-alpha-D-xylose = 3-O-[alpha-D-xylosyl-(1-&gt;3)-beta-D-glucosyl]-L-seryl-[EGF-like domain protein] + UDP + H(+). Glycosyltransferase which elongates the O-linked glucose attached to EGF-like repeats in the extracellular domain of Notch proteins by catalyzing the addition of xylose. In Homo sapiens (Human), this protein is Glucoside xylosyltransferase 1 (GXYLT1).